Consider the following 281-residue polypeptide: Bifunctional protein FolD (281 aa).

NADP(+) contacts are provided by residues 165-167 (GRS) and Ser-190.

Belongs to the tetrahydrofolate dehydrogenase/cyclohydrolase family. In terms of assembly, homodimer.

It catalyses the reaction (6R)-5,10-methylene-5,6,7,8-tetrahydrofolate + NADP(+) = (6R)-5,10-methenyltetrahydrofolate + NADPH. The enzyme catalyses (6R)-5,10-methenyltetrahydrofolate + H2O = (6R)-10-formyltetrahydrofolate + H(+). It functions in the pathway one-carbon metabolism; tetrahydrofolate interconversion. Functionally, catalyzes the oxidation of 5,10-methylenetetrahydrofolate to 5,10-methenyltetrahydrofolate and then the hydrolysis of 5,10-methenyltetrahydrofolate to 10-formyltetrahydrofolate. In Polaromonas naphthalenivorans (strain CJ2), this protein is Bifunctional protein FolD.